We begin with the raw amino-acid sequence, 453 residues long: Na(+)/H(+) antiporter NhaA (453 aa).

A run of 11 helical transmembrane segments spans residues 22–42 (ASLL…SPWA), 72–92 (MLAF…GLEI), 108–128 (LLPI…YMLV), 137–157 (GAAI…GLLG), 166–186 (IFLT…IALF), 189–209 (GHIA…LYVG), 218–238 (LFFY…GIHP), 316–336 (PLVN…VTFG), 343–363 (LVNV…LGIF), 386–406 (LFGV…IANL), and 424–444 (LGVF…LKWV).

Belongs to the NhaA Na(+)/H(+) (TC 2.A.33) antiporter family.

Its subcellular location is the cell inner membrane. It carries out the reaction Na(+)(in) + 2 H(+)(out) = Na(+)(out) + 2 H(+)(in). In terms of biological role, na(+)/H(+) antiporter that extrudes sodium in exchange for external protons. The chain is Na(+)/H(+) antiporter NhaA from Parabacteroides distasonis (strain ATCC 8503 / DSM 20701 / CIP 104284 / JCM 5825 / NCTC 11152).